The sequence spans 98 residues: Small ribosomal subunit protein eS24 (98 aa).

A disordered region spans residues 76 to 98 (GRQRTERSYLLNRGEPKKEEEEA). The span at 89-98 (GEPKKEEEEA) shows a compositional bias: basic and acidic residues.

It belongs to the eukaryotic ribosomal protein eS24 family.

This Methanosphaerula palustris (strain ATCC BAA-1556 / DSM 19958 / E1-9c) protein is Small ribosomal subunit protein eS24.